The primary structure comprises 182 residues: Nucleoid-associated protein At2g24020, chloroplastic (182 aa).

The transit peptide at 1–48 (MASMAATTNFTKSMLFPFSHVSGNASLNSQRRTWPKQYKSKNGYRSLR) directs the protein to the chloroplast.

This sequence belongs to the YbaB/EbfC family. Homodimer. Interacts with ALB3 and ALB4.

The protein resides in the plastid. It localises to the chloroplast stroma. Functionally, participates with ALB4 in thylakoid protein targeting. May function with specific subset of thylakoidal proteins. Binds to DNA and alters its conformation. May be involved in regulation of gene expression, nucleoid organization and DNA protection. This Arabidopsis thaliana (Mouse-ear cress) protein is Nucleoid-associated protein At2g24020, chloroplastic.